The sequence spans 369 residues: Probable dual-specificity RNA methyltransferase RlmN (369 aa).

E108 serves as the catalytic Proton acceptor. Residues Y114–E352 enclose the Radical SAM core domain. C121 and C357 are oxidised to a cystine. [4Fe-4S] cluster-binding residues include C128, C132, and C135. S-adenosyl-L-methionine contacts are provided by residues G178–E179, S212, S235–H237, and N314. C357 (S-methylcysteine intermediate) is an active-site residue.

This sequence belongs to the radical SAM superfamily. RlmN family. It depends on [4Fe-4S] cluster as a cofactor.

The protein resides in the cytoplasm. The enzyme catalyses adenosine(2503) in 23S rRNA + 2 reduced [2Fe-2S]-[ferredoxin] + 2 S-adenosyl-L-methionine = 2-methyladenosine(2503) in 23S rRNA + 5'-deoxyadenosine + L-methionine + 2 oxidized [2Fe-2S]-[ferredoxin] + S-adenosyl-L-homocysteine. The catalysed reaction is adenosine(37) in tRNA + 2 reduced [2Fe-2S]-[ferredoxin] + 2 S-adenosyl-L-methionine = 2-methyladenosine(37) in tRNA + 5'-deoxyadenosine + L-methionine + 2 oxidized [2Fe-2S]-[ferredoxin] + S-adenosyl-L-homocysteine. In terms of biological role, specifically methylates position 2 of adenine 2503 in 23S rRNA and position 2 of adenine 37 in tRNAs. The protein is Probable dual-specificity RNA methyltransferase RlmN of Corynebacterium efficiens (strain DSM 44549 / YS-314 / AJ 12310 / JCM 11189 / NBRC 100395).